The following is an 846-amino-acid chain: Disrupted in schizophrenia 1 homolog (846 aa).

Disordered regions lie at residues 1–53 (MQGA…IGFL), 127–147 (HSGV…GDSG), 231–257 (EAEP…GEPR), 277–312 (TRSN…QDGG), and 409–436 (LHGA…AQDS). The segment at 1 to 288 (MQGAGSRGAW…SNRQPECGMV (288 aa)) is interaction with MAP1A. Composition is skewed to basic and acidic residues over residues 133–143 (GNDRRQSERLT) and 248–257 (GSDRPHGEPR). The segment covering 277-300 (TRSNRQPECGMVSSSDAGFSSQDA) has biased composition (polar residues). The segment at 289–686 (SSSDAGFSSQ…LERVWKADLE (398 aa)) is interaction with TRAF3IP1. Residues 429-587 (RRTTAQDSLP…LLEAKMLALS (159 aa)) are required for localization to punctate cytoplasmic foci. The necessary and sufficient for interaction with PCNT and localization at the centrosome stretch occupies residues 435–846 (DSLPGLAVTR…STAGAQEAED (412 aa)). Residues 440-489 (LAVTRRDWLMREKEQLQKEIEALRARVSVLEAKEQRLSQELEDQEMLLRW) adopt a coiled-coil conformation. An interaction with ATF4 and ATF5 region spans residues 588–846 (GSCFSTAKEL…STAGAQEAED (259 aa)). Residues 721 to 846 (TAALAVPRTP…STAGAQEAED (126 aa)) are interaction with NDEL1 and PAFAH1B1. The segment at 721–846 (TAALAVPRTP…STAGAQEAED (126 aa)) is interaction with PAFAH1B1. The segment at 795–828 (GHDEALFQSLQGELQMVKETLQTMFLQLQPAKEA) is interaction with NDEL1.

Interacts with NDEL1. Interacts with CCDC88A (via C-terminus); the interaction is direct. Interacts with GSK3B. Interacts with tubulin alpha, ACTN2, ANKHD1, ATF4, ATF5, CEP63, EIF3S3, MAP1A, NDEL1, PAFAH1B1, RANBP9, SPTBN4, SYNE1 and TRAF3IP1. Interaction with microtubules may be mediated in part by TRAF3IP1. Interacts (via C-terminal) with PCNT. Interacts with CHCHD6. Interacts with CCDC141. Interacts with FBXW7, the substrate-recognition component of a SCF (SKP1-CUL1-F-box protein) E3 ubiquitin-protein ligase complex; the interaction targets DISC1 for proteasomal degradation. Interacts with ZNF365. Interacts with ATF4; inhibiting ATF4 transcription factor activity by disrupting ATF4 dimerization and DNA-binding. Interacts with PDE4B. Ubiquitinated. Ubiquitination with 'Lys-48'-linked polyubiquitin chains leads to its proteasomal degradation. As to expression, expressed in brain, heart, kidney, liver and thymus. Within the brain expression is high in the cerebral cortex, hippocampus and olfactory bulb and is also seen at lower levels in the cerebellum (at protein level).

The protein resides in the cytoplasm. It localises to the cytoskeleton. Its subcellular location is the mitochondrion. It is found in the microtubule organizing center. The protein localises to the centrosome. The protein resides in the postsynaptic density. Involved in the regulation of multiple aspects of embryonic and adult neurogenesis. Required for neural progenitor proliferation in the ventrical/subventrical zone during embryonic brain development and in the adult dentate gyrus of the hippocampus. Participates in the Wnt-mediated neural progenitor proliferation as a positive regulator by modulating GSK3B activity and CTNNB1 abundance. Plays a role as a modulator of the AKT-mTOR signaling pathway controlling the tempo of the process of newborn neurons integration during adult neurogenesis, including neuron positioning, dendritic development and synapse formation. Inhibits the activation of AKT-mTOR signaling upon interaction with CCDC88A. Regulates the migration of early-born granule cell precursors toward the dentate gyrus during the hippocampal development. Inhibits ATF4 transcription factor activity in neurons by disrupting ATF4 dimerization and DNA-binding. Plays a role, together with PCNT, in the microtubule network formation. The polypeptide is Disrupted in schizophrenia 1 homolog (Rattus norvegicus (Rat)).